A 324-amino-acid polypeptide reads, in one-letter code: COP9 signalosome complex subunit 6 (324 aa).

Positions 38–171 (VALHPLVILN…VSVFESVIDI (134 aa)) constitute an MPN domain.

This sequence belongs to the peptidase M67A family. CSN6 subfamily. In terms of assembly, component of the CSN complex, composed of COPS1/GPS1, COPS2, COPS3, COPS4, COPS5, COPS6, COPS7 (COPS7A or COPS7B), COPS8 and COPS9. In the complex, it probably interacts directly with COPS2, COPS4, COPS5, COPS7 (COPS7A or COPS7B) and COPS9. Interacts with the translation initiation factor EIF3S6. Interacts weakly with RBX1. Directly interacts with COP1 and 14-3-3 protein sigma/SFN. Interacts with ERCC6.

It localises to the cytoplasm. Its subcellular location is the nucleus. Its function is as follows. Component of the COP9 signalosome complex (CSN), a complex involved in various cellular and developmental processes. The CSN complex is an essential regulator of the ubiquitin (Ubl) conjugation pathway by mediating the deneddylation of the cullin subunits of SCF-type E3 ligase complexes, leading to decrease the Ubl ligase activity of SCF-type complexes such as SCF, CSA or DDB2. The complex is also involved in phosphorylation of p53/TP53, c-jun/JUN, IkappaBalpha/NFKBIA, ITPK1 and IRF8, possibly via its association with CK2 and PKD kinases. CSN-dependent phosphorylation of TP53 and JUN promotes and protects degradation by the Ubl system, respectively. Has some glucocorticoid receptor-responsive activity. Stabilizes COP1 through reducing COP1 auto-ubiquitination and decelerating COP1 turnover rate, hence regulates the ubiquitination of COP1 targets, including SFN. This is COP9 signalosome complex subunit 6 (Cops6) from Mus musculus (Mouse).